The sequence spans 373 residues: D-amino-acid oxidase 3 (373 aa).

Residues 1–19 (MVKYDAVILGSGVLGLSIA) form the signal peptide. The FAD site is built by Ser-11, Leu-14, Asp-35, Ala-46, Ser-47, Gly-51, and Asn-53. Phe-57 contributes to the anthranilate binding site. A glycan (N-linked (GlcNAc...) asparagine) is linked at Asn-180. Cys-214 and Cys-271 are oxidised to a cystine. The anthranilate site is built by Tyr-229, Tyr-246, and Arg-296. (R)-lactate is bound by residues Tyr-229, Tyr-246, and Arg-296. FAD-binding residues include Arg-296, Gly-342, Gly-345, Tyr-346, and Gln-347. Residues 371–373 (AKL) carry the Microbody targeting signal motif.

The protein belongs to the DAMOX/DASOX family. FAD is required as a cofactor.

The protein resides in the peroxisome matrix. It catalyses the reaction a D-alpha-amino acid + O2 + H2O = a 2-oxocarboxylate + H2O2 + NH4(+). Its function is as follows. Catalyzes the oxidative deamination of D-amino acids with broad substrate specificity. Enables the organism to utilize D-amino acids as a source of nutrients. Enables the organism to utilize D-glutamate and D-methionine as a nitrogen source. Protects the organism from the toxicity of D-amino acids, including from D-glutamate. May play a role in its interaction with the host. The protein is D-amino-acid oxidase 3 of Cryptococcus neoformans var. grubii serotype A (strain H99 / ATCC 208821 / CBS 10515 / FGSC 9487) (Filobasidiella neoformans var. grubii).